A 555-amino-acid polypeptide reads, in one-letter code: Phosphomethylpyrimidine synthase (555 aa).

Substrate-binding positions include N191, M220, Y249, H285, 305 to 307 (SRG), 346 to 349 (DGLR), and E385. H389 provides a ligand contact to Zn(2+). Y412 serves as a coordination point for substrate. A Zn(2+)-binding site is contributed by H453. 3 residues coordinate [4Fe-4S] cluster: C533, C536, and C541.

The protein belongs to the ThiC family. Homodimer. [4Fe-4S] cluster serves as cofactor.

The catalysed reaction is 5-amino-1-(5-phospho-beta-D-ribosyl)imidazole + S-adenosyl-L-methionine = 4-amino-2-methyl-5-(phosphooxymethyl)pyrimidine + CO + 5'-deoxyadenosine + formate + L-methionine + 3 H(+). The protein operates within cofactor biosynthesis; thiamine diphosphate biosynthesis. In terms of biological role, catalyzes the synthesis of the hydroxymethylpyrimidine phosphate (HMP-P) moiety of thiamine from aminoimidazole ribotide (AIR) in a radical S-adenosyl-L-methionine (SAM)-dependent reaction. The sequence is that of Phosphomethylpyrimidine synthase from Ehrlichia ruminantium (strain Welgevonden).